A 491-amino-acid polypeptide reads, in one-letter code: HEPACAM family member 2 (491 aa).

The signal sequence occupies residues 1 to 18 (MWLRVFTAFLSFTAGACS). N-linked (GlcNAc...) asparagine glycans are attached at residues N73, N117, and N153. Ig-like C2-type domains follow at residues 137–221 (PVVQ…SDII) and 223–319 (PTIY…THFT). Intrachain disulfides connect C158–C207 and C258–C303. The N-linked (GlcNAc...) asparagine glycan is linked to N308. The chain crosses the membrane as a helical span at residues 340 to 360 (LASITGISLFLIISMCLLFLW). The Cytoplasmic segment spans residues 361 to 491 (KKFQPYKVIK…GKHSRAKQCI (131 aa)). A compositionally biased stretch (polar residues) spans 444–454 (QQQDHPESSSQ). Disordered regions lie at residues 444–466 (QQQD…DRHD) and 472–491 (ELGH…KQCI). The span at 472–482 (ELGHCKEQDKG) shows a compositional bias: basic and acidic residues.

Post-translationally, poly-ADP-ribosylated (PARsylated) by tankyrase TNKS during late G2 and prophase, leading to translocation to mitotic centrosomes. In terms of processing, N-glycosylated.

The protein resides in the golgi apparatus membrane. The protein localises to the cytoplasm. It is found in the cytoskeleton. Its subcellular location is the spindle. It localises to the microtubule organizing center. The protein resides in the centrosome. The protein localises to the midbody. In terms of biological role, required during prometaphase for centrosome maturation. Following poly-ADP-ribosylation (PARsylation) by TNKS, translocates from the Golgi apparatus to mitotic centrosomes and plays a key role in the formation of robust microtubules for prompt movement of chromosomes: anchors AKAP9/CG-NAP, a scaffold protein of the gamma-tubulin ring complex and promotes centrosome maturation. The protein is HEPACAM family member 2 (HEPACAM2) of Bos taurus (Bovine).